The following is a 361-amino-acid chain: Probable dual-specificity RNA methyltransferase RlmN (361 aa).

E102 functions as the Proton acceptor in the catalytic mechanism. One can recognise a Radical SAM core domain in the interval 108 to 344; the sequence is SGDRLTVCVS…VRWSKGLGAD (237 aa). A disulfide bridge links C115 with C347. Positions 122, 126, and 129 each coordinate [4Fe-4S] cluster. S-adenosyl-L-methionine-binding positions include 169–170, S199, 228–230, and N304; these read GE and SLH. The active-site S-methylcysteine intermediate is the C347.

It belongs to the radical SAM superfamily. RlmN family. Requires [4Fe-4S] cluster as cofactor.

It localises to the cytoplasm. It carries out the reaction adenosine(2503) in 23S rRNA + 2 reduced [2Fe-2S]-[ferredoxin] + 2 S-adenosyl-L-methionine = 2-methyladenosine(2503) in 23S rRNA + 5'-deoxyadenosine + L-methionine + 2 oxidized [2Fe-2S]-[ferredoxin] + S-adenosyl-L-homocysteine. The enzyme catalyses adenosine(37) in tRNA + 2 reduced [2Fe-2S]-[ferredoxin] + 2 S-adenosyl-L-methionine = 2-methyladenosine(37) in tRNA + 5'-deoxyadenosine + L-methionine + 2 oxidized [2Fe-2S]-[ferredoxin] + S-adenosyl-L-homocysteine. Functionally, specifically methylates position 2 of adenine 2503 in 23S rRNA and position 2 of adenine 37 in tRNAs. The polypeptide is Probable dual-specificity RNA methyltransferase RlmN (Synechococcus elongatus (strain ATCC 33912 / PCC 7942 / FACHB-805) (Anacystis nidulans R2)).